We begin with the raw amino-acid sequence, 765 residues long: Zinc finger and BTB domain-containing protein 49 (765 aa).

One can recognise a BTB domain in the interval 25-91 (CDCMLVVKGV…MYTSHLDLNQ (67 aa)). Disordered regions lie at residues 165 to 203 (QQNK…GSCT) and 275 to 294 (NFLA…DATC). C2H2-type zinc fingers lie at residues 395-417 (YACE…KRSH), 423-445 (FECN…LRRH), 451-473 (YICE…IIIH), 479-501 (HLCD…KKTH), 507-529 (FTCD…RIRH), 535-557 (YSCS…VRTH), and 563-585 (YTCE…KKMH).

Belongs to the krueppel C2H2-type zinc-finger protein family. In terms of assembly, isoform 1 interacts with EP300 and KAT5/Tip60. The interaction with EP300 is direct and leads to synergistic induction of CDKN1A. On the CDKN1A promoter, forms a complex with ZBTB17/Miz-1; this interaction leads to additive CDKN1A transactivation. Isoform 3 also interacts with ZBTB17; this interaction may block ZBTB17 repressor activity. Highly expressed in normal epidermis and in other epithelial tissues, including in colon and lung. Tends to be down-regulated in colon, lung and skin cancer tissues.

It localises to the cytoplasm. Its subcellular location is the nucleus. Transcription factor. Inhibits cell proliferation by activating either CDKN1A/p21 transcription or RB1 transcription. In terms of biological role, binds CDKN1A promoter and activates its transcription; this activity is further potentiated in the presence of EP300 (synergistic) and ZBTB17/Miz-1 (additive). Functionally, activates RB1 transcription most probably by antagonizing ZBTB17 repression of RB1. Does not bind directly RB1 promoter. The chain is Zinc finger and BTB domain-containing protein 49 (ZBTB49) from Homo sapiens (Human).